We begin with the raw amino-acid sequence, 232 residues long: Glycerol-3-phosphate acyltransferase (232 aa).

6 helical membrane passes run phenylalanine 4 to glycine 24, valine 56 to phenylalanine 76, isoleucine 90 to alanine 110, methionine 124 to valine 144, valine 152 to phenylalanine 172, and serine 191 to histidine 211.

Belongs to the PlsY family. Probably interacts with PlsX.

It localises to the cell inner membrane. The catalysed reaction is an acyl phosphate + sn-glycerol 3-phosphate = a 1-acyl-sn-glycero-3-phosphate + phosphate. It functions in the pathway lipid metabolism; phospholipid metabolism. In terms of biological role, catalyzes the transfer of an acyl group from acyl-phosphate (acyl-PO(4)) to glycerol-3-phosphate (G3P) to form lysophosphatidic acid (LPA). This enzyme utilizes acyl-phosphate as fatty acyl donor, but not acyl-CoA or acyl-ACP. The protein is Glycerol-3-phosphate acyltransferase of Chlorobaculum tepidum (strain ATCC 49652 / DSM 12025 / NBRC 103806 / TLS) (Chlorobium tepidum).